Reading from the N-terminus, the 325-residue chain is Fatty acid synthase alpha subunit hexA (325 aa).

Mg(2+) is bound at residue Asp209. Residues 209 to 211 (DLV), 255 to 265 (EAVFKCLHTQT), 279 to 282 (KSDN), and 301 to 303 (ISH) each bind acetyl-CoA. Residue Ser302 coordinates Mg(2+).

It belongs to the thiolase-like superfamily. Fungal fatty acid synthetase subunit alpha family. [Alpha(6)beta(6)] hexamers of two multifunctional subunits (alpha and beta). 4'-phosphopantetheine is transferred from CoA to a specific serine of the acyl carrier domain by the C-terminal PPT domain. This modification is essential for activity because fatty acids are bound in thioester linkage to the sulfhydryl of the prosthetic group.

It carries out the reaction acetyl-CoA + n malonyl-CoA + 2n NADPH + 4n H(+) = a long-chain-acyl-CoA + n CoA + n CO2 + 2n NADP(+).. The enzyme catalyses a fatty acyl-[ACP] + malonyl-[ACP] + H(+) = a 3-oxoacyl-[ACP] + holo-[ACP] + CO2. It catalyses the reaction a (3R)-hydroxyacyl-[ACP] + NADP(+) = a 3-oxoacyl-[ACP] + NADPH + H(+). The protein operates within mycotoxin biosynthesis. Functionally, fatty acid synthase alpha subunit; part of the fragmented gene cluster that mediates the biosynthesis of dothistromin (DOTH), a polyketide toxin very similar in structure to the aflatoxin precursor, versicolorin B. The first step of the pathway is the conversion of acetate to norsolorinic acid (NOR) and requires the fatty acid synthase subunits hexA and hexB, as well as the polyketide synthase pksA. PksA combines a hexanoyl starter unit and 7 malonyl-CoA extender units to synthesize the precursor NOR. The hexanoyl starter unit is provided to the acyl-carrier protein (ACP) domain by the fungal fatty acid synthase hexA/hexB. The second step is the conversion of NOR to averantin (AVN) and requires the norsolorinic acid ketoreductase nor1, which catalyzes the dehydration of norsolorinic acid to form (1'S)-averantin. The cytochrome P450 monooxygenase avnA then catalyzes the hydroxylation of AVN to 5'hydroxyaverantin (HAVN). The next step is performed by adhA that transforms HAVN to averufin (AVF). Averufin might then be converted to hydroxyversicolorone by cypX and avfA. Hydroxyversicolorone is further converted versiconal hemiacetal acetate (VHA) by moxY. VHA is then the substrate for the versiconal hemiacetal acetate esterase est1 to yield versiconal (VAL). Versicolorin B synthase vbsA then converts VAL to versicolorin B (VERB) by closing the bisfuran ring. Then, the activity of the versicolorin B desaturase verB leads to versicolorin A (VERA). DotB, a predicted chloroperoxidase, may perform epoxidation of the A-ring of VERA. Alternatively, a cytochrome P450, such as cypX or avnA could catalyze this step. It is also possible that another, uncharacterized, cytochrome P450 enzyme is responsible for this step. Opening of the epoxide could potentially be achieved by the epoxide hydrolase epoA. However, epoA seems not to be required for DOTH biosynthesis, but other epoxide hydrolases may have the ability to complement this hydrolysis. Alternatively, opening of the epoxide ring could be achieved non-enzymatically. The next step is the deoxygenation of ring A to yield the 5,8-dihydroxyanthraquinone which is most likely catalyzed by the NADPH dehydrogenase encoded by ver1. The last stages of DOTH biosynthesis are proposed to involve hydroxylation of the bisfuran. OrdB and norB might have oxidative roles here. An alternative possibility is that cytochrome P450 monoogenases such as avnA and cypX might perform these steps in addition to previously proposed steps. The polypeptide is Fatty acid synthase alpha subunit hexA (Dothistroma septosporum (Red band needle blight fungus)).